The sequence spans 604 residues: Aspartate--tRNA(Asp/Asn) ligase (604 aa).

An L-aspartate-binding site is contributed by glutamate 187. The interval glutamine 211–lysine 214 is aspartate. The L-aspartate site is built by arginine 233 and histidine 461. Residue arginine 233 to glutamate 235 participates in ATP binding. Glutamate 495 contacts ATP. Arginine 502 contacts L-aspartate. Position 547-550 (glycine 547–arginine 550) interacts with ATP.

Belongs to the class-II aminoacyl-tRNA synthetase family. Type 1 subfamily. As to quaternary structure, homodimer.

It is found in the cytoplasm. It catalyses the reaction tRNA(Asx) + L-aspartate + ATP = L-aspartyl-tRNA(Asx) + AMP + diphosphate. In terms of biological role, aspartyl-tRNA synthetase with relaxed tRNA specificity since it is able to aspartylate not only its cognate tRNA(Asp) but also tRNA(Asn). Reaction proceeds in two steps: L-aspartate is first activated by ATP to form Asp-AMP and then transferred to the acceptor end of tRNA(Asp/Asn). This is Aspartate--tRNA(Asp/Asn) ligase from Chlorobium luteolum (strain DSM 273 / BCRC 81028 / 2530) (Pelodictyon luteolum).